A 126-amino-acid chain; its full sequence is Allergen Tha p 1 (126 aa).

The first 18 residues, 1-18, serve as a signal peptide directing secretion; sequence MKLLILALTCAAAVWARP.

The protein belongs to the insect A10/OS-D protein family.

Its subcellular location is the secreted. The protein is Allergen Tha p 1 of Thaumetopoea pityocampa (Pine processionary moth).